The following is a 556-amino-acid chain: MNDDLAIAQATKLKPIDEIAEFAGIERKYLKPYGNYIAKVSHRIYEELAQREDGNLILVTAITPTSAGEGKTTTSIGLSMALNRLGKKSFVTLREPSIGPVMGIKGGAAGGGYSQVLPMEDINLHFTGDIHAVSLAHNLLSAAIDAHLKFDNELEIDSTQIYWPRAMDMNDRALRKIVVGLGGKANGYPREDKFIITAASEIMAILCLAKDLEDLKERVGNIVIAKNKKKEYVLAKDLKVHGAIAALLKDAIDPNLVQTIEGTPAFIHGGPFANIAHGTNSIIATKIALKLSDYVVTEAGFGADLGGEKFLNFVSQVAGFKPSVVVLVASLRALKLHGGAKKDSITEENLEALEKGFVNLQVHYENLRKFGVPVLTALNVFPTDTDSEKKLFEKLCEKHGIPFGESRVWAKGGKGGEALAREVIKLAETHTSEYHPLYLMDTPIEEKLDILTREIYRAKGYELSPTAKAKLRSFKKNGFGNAPVIVAKTQYSISDNPKLLGAPKDYIFNIRDLNLSAGAGFVVAVSGDIMLMPGLGKEFGAQRIDIDKSGKISGLF.

65–72 is a binding site for ATP; that stretch reads TSAGEGKT.

It belongs to the formate--tetrahydrofolate ligase family.

The catalysed reaction is (6S)-5,6,7,8-tetrahydrofolate + formate + ATP = (6R)-10-formyltetrahydrofolate + ADP + phosphate. The protein operates within one-carbon metabolism; tetrahydrofolate interconversion. The protein is Formate--tetrahydrofolate ligase of Kosmotoga olearia (strain ATCC BAA-1733 / DSM 21960 / TBF 19.5.1).